The following is a 594-amino-acid chain: Invasin CotH2 (594 aa).

The first 19 residues, 1–19, serve as a signal peptide directing secretion; that stretch reads MKLSLTIVSSSFLVAIAHA. Residues Asn77, Asn162, Asn226, Asn316, Asn441, Asn519, and Asn533 are each glycosylated (N-linked (GlcNAc...) asparagine). Residues 529–565 form a disordered region; the sequence is PPAANGTATSTNDGGNTHTAAGESKPASSSESSGSKI. Residues 534–547 are compositionally biased toward polar residues; sequence GTATSTNDGGNTHT. Residues 548–565 show a composition bias toward low complexity; that stretch reads AAGESKPASSSESSGSKI. Residue Ser571 is the site of GPI-anchor amidated serine attachment. A propeptide spans 572 to 594 (removed in mature form); the sequence is GASRSAVSTVLLGVTALVATAIF.

In terms of assembly, interacts with host epithelial cell surface HSPA5/BiP protein.

It is found in the cell membrane. Promotes invasion of host epithelial cells by adhering to receptors on the host cell surface to facilitate endocytosis of the pathogen into host cells. Binds HSPA5/BiP protein on the cell surface of host epithelial cells. In Rhizopus delemar (strain RA 99-880 / ATCC MYA-4621 / FGSC 9543 / NRRL 43880) (Mucormycosis agent), this protein is Invasin CotH2.